The primary structure comprises 485 residues: Probable protein phosphatase 2C 3 (485 aa).

Low complexity predominate over residues 1–11 (MSSPSPSSEAA). 2 disordered regions span residues 1–29 (MSSPSPSSEAAAAHHHHHQRRQHAGAAGG) and 43–72 (ARAERPMGSGSRICARDEEDGGGGGGAEGG). Residues 13 to 23 (AHHHHHQRRQH) are compositionally biased toward basic residues. The region spanning 107 to 353 (SSSSSSSLAS…DDTTCIVVDM (247 aa)) is the PPM-type phosphatase domain. 4 residues coordinate Mn(2+): Asp129, Gly130, Asp305, and Asp344.

The protein belongs to the PP2C family. The cofactor is Mg(2+). It depends on Mn(2+) as a cofactor.

The catalysed reaction is O-phospho-L-seryl-[protein] + H2O = L-seryl-[protein] + phosphate. It carries out the reaction O-phospho-L-threonyl-[protein] + H2O = L-threonyl-[protein] + phosphate. This Oryza sativa subsp. japonica (Rice) protein is Probable protein phosphatase 2C 3.